Here is a 593-residue protein sequence, read N- to C-terminus: Ribonuclease Y (593 aa).

A helical transmembrane segment spans residues 6-26 (ILLMYLIVGLLTALTVLIFVF). The KH domain occupies 218–278 (DPIKVKKVTD…IKLEVAYNAL (61 aa)). In terms of domain architecture, HD spans 354–464 (VLTHSIEAAQ…TKIADFLSAA (111 aa)).

This sequence belongs to the RNase Y family.

Its subcellular location is the cell membrane. Functionally, endoribonuclease that initiates mRNA decay. The polypeptide is Ribonuclease Y (Mycoplasmoides gallisepticum (strain R(low / passage 15 / clone 2)) (Mycoplasma gallisepticum)).